A 151-amino-acid polypeptide reads, in one-letter code: Transcriptional regulator MraZ (151 aa).

SpoVT-AbrB domains lie at 5–51 (AHEL…PVAE) and 81–124 (AEIL…GREQ).

Belongs to the MraZ family. In terms of assembly, forms oligomers.

It localises to the cytoplasm. The protein resides in the nucleoid. The polypeptide is Transcriptional regulator MraZ (Neisseria meningitidis serogroup A / serotype 4A (strain DSM 15465 / Z2491)).